The chain runs to 262 residues: Small ribosomal subunit protein uS2 (262 aa).

The interval 224-262 is disordered; the sequence is GKQGQDDAQQETADDNAANETVSEDSLKNLKNSVEGKED.

The protein belongs to the universal ribosomal protein uS2 family.

The sequence is that of Small ribosomal subunit protein uS2 from Limosilactobacillus reuteri (strain DSM 20016) (Lactobacillus reuteri).